Here is an 857-residue protein sequence, read N- to C-terminus: Putative disease resistance protein At1g50180 (857 aa).

The stretch at 27-60 (IGDQVKQLQDELKRLNCFLKDADEKQHESERVRN) forms a coiled coil. In terms of domain architecture, NB-ARC spans 148–461 (SLREQRQSFP…AEGMVMPVKH (314 aa)). 192–199 (GMGGLGKT) is a binding site for ATP. 4 LRR repeats span residues 653–678 (MTSL…SLSK), 680–703 (LKRL…DVTQ), 754–780 (LPNL…NLEN), and 791–816 (MMRL…RFLK).

Belongs to the disease resistance NB-LRR family.

Functionally, potential disease resistance protein. The polypeptide is Putative disease resistance protein At1g50180 (Arabidopsis thaliana (Mouse-ear cress)).